Reading from the N-terminus, the 158-residue chain is Transcription elongation factor GreA (158 aa).

The stretch at 47–74 forms a coiled coil; it reads AEYHAAKEEQSHNEGRINELEDKLARAD.

The protein belongs to the GreA/GreB family.

Necessary for efficient RNA polymerase transcription elongation past template-encoded arresting sites. The arresting sites in DNA have the property of trapping a certain fraction of elongating RNA polymerases that pass through, resulting in locked ternary complexes. Cleavage of the nascent transcript by cleavage factors such as GreA or GreB allows the resumption of elongation from the new 3'terminus. GreA releases sequences of 2 to 3 nucleotides. The polypeptide is Transcription elongation factor GreA (Rhodopseudomonas palustris (strain ATCC BAA-98 / CGA009)).